The primary structure comprises 274 residues: Dermonecrotic toxin LarSicTox-alphaIV1 (274 aa).

H5 is an active-site residue. Positions 25 and 27 each coordinate Mg(2+). Catalysis depends on H41, which acts as the Nucleophile. Intrachain disulfides connect C45/C51 and C47/C192. Residue D85 coordinates Mg(2+).

Belongs to the arthropod phospholipase D family. Class II subfamily. Mg(2+) serves as cofactor. In terms of tissue distribution, expressed by the venom gland.

The protein resides in the secreted. The catalysed reaction is an N-(acyl)-sphingosylphosphocholine = an N-(acyl)-sphingosyl-1,3-cyclic phosphate + choline. It catalyses the reaction an N-(acyl)-sphingosylphosphoethanolamine = an N-(acyl)-sphingosyl-1,3-cyclic phosphate + ethanolamine. It carries out the reaction a 1-acyl-sn-glycero-3-phosphocholine = a 1-acyl-sn-glycero-2,3-cyclic phosphate + choline. The enzyme catalyses a 1-acyl-sn-glycero-3-phosphoethanolamine = a 1-acyl-sn-glycero-2,3-cyclic phosphate + ethanolamine. Its function is as follows. Dermonecrotic toxins cleave the phosphodiester linkage between the phosphate and headgroup of certain phospholipids (sphingolipid and lysolipid substrates), forming an alcohol (often choline) and a cyclic phosphate. This toxin acts on sphingomyelin (SM). It may also act on ceramide phosphoethanolamine (CPE), lysophosphatidylcholine (LPC) and lysophosphatidylethanolamine (LPE), but not on lysophosphatidylserine (LPS), and lysophosphatidylglycerol (LPG). It acts by transphosphatidylation, releasing exclusively cyclic phosphate products as second products. Induces dermonecrosis, hemolysis, increased vascular permeability, edema, inflammatory response, and platelet aggregation. In Loxosceles arizonica (Arizona brown spider), this protein is Dermonecrotic toxin LarSicTox-alphaIV1.